The primary structure comprises 208 residues: Thiamine-phosphate synthase (208 aa).

4-amino-2-methyl-5-(diphosphooxymethyl)pyrimidine contacts are provided by residues 37-39 (QVR) and asparagine 70. Mg(2+) is bound by residues aspartate 71 and aspartate 90. Threonine 109 contacts 4-amino-2-methyl-5-(diphosphooxymethyl)pyrimidine. 135-137 (TTS) provides a ligand contact to 2-[(2R,5Z)-2-carboxy-4-methylthiazol-5(2H)-ylidene]ethyl phosphate. Lysine 138 is a 4-amino-2-methyl-5-(diphosphooxymethyl)pyrimidine binding site. Glycine 166 contributes to the 2-[(2R,5Z)-2-carboxy-4-methylthiazol-5(2H)-ylidene]ethyl phosphate binding site.

It belongs to the thiamine-phosphate synthase family. Mg(2+) is required as a cofactor.

It catalyses the reaction 2-[(2R,5Z)-2-carboxy-4-methylthiazol-5(2H)-ylidene]ethyl phosphate + 4-amino-2-methyl-5-(diphosphooxymethyl)pyrimidine + 2 H(+) = thiamine phosphate + CO2 + diphosphate. The enzyme catalyses 2-(2-carboxy-4-methylthiazol-5-yl)ethyl phosphate + 4-amino-2-methyl-5-(diphosphooxymethyl)pyrimidine + 2 H(+) = thiamine phosphate + CO2 + diphosphate. The catalysed reaction is 4-methyl-5-(2-phosphooxyethyl)-thiazole + 4-amino-2-methyl-5-(diphosphooxymethyl)pyrimidine + H(+) = thiamine phosphate + diphosphate. Its pathway is cofactor biosynthesis; thiamine diphosphate biosynthesis; thiamine phosphate from 4-amino-2-methyl-5-diphosphomethylpyrimidine and 4-methyl-5-(2-phosphoethyl)-thiazole: step 1/1. Functionally, condenses 4-methyl-5-(beta-hydroxyethyl)thiazole monophosphate (THZ-P) and 2-methyl-4-amino-5-hydroxymethyl pyrimidine pyrophosphate (HMP-PP) to form thiamine monophosphate (TMP). The protein is Thiamine-phosphate synthase of Salinispora arenicola (strain CNS-205).